A 292-amino-acid polypeptide reads, in one-letter code: Undecaprenyl-diphosphatase (292 aa).

7 helical membrane-spanning segments follow: residues 1–21, 46–66, 90–110, 114–134, 192–212, 225–245, and 253–273; these read MSLVSAALFGLLQALTEFLPV, FVTIIQAGTTLAVLVYFRADI, LGWYIVLGTVPAALAGKLLEH, ALGNWVIAGSLVALGLVLLAA, FLLSVPITLAAGAYKLWSTVP, VVGTVVSAVAGYLVIDWLLAW, and VFVVWRLAAGAAIAALILSGV.

Belongs to the UppP family.

It localises to the cell inner membrane. The catalysed reaction is di-trans,octa-cis-undecaprenyl diphosphate + H2O = di-trans,octa-cis-undecaprenyl phosphate + phosphate + H(+). Its function is as follows. Catalyzes the dephosphorylation of undecaprenyl diphosphate (UPP). Confers resistance to bacitracin. The sequence is that of Undecaprenyl-diphosphatase from Anaeromyxobacter dehalogenans (strain 2CP-1 / ATCC BAA-258).